The sequence spans 160 residues: Transcription elongation factor GreA (160 aa).

Residues 1-72 adopt a coiled-coil conformation; sequence MAEKTYPMTL…QISSLETKIR (72 aa).

Belongs to the GreA/GreB family.

In terms of biological role, necessary for efficient RNA polymerase transcription elongation past template-encoded arresting sites. The arresting sites in DNA have the property of trapping a certain fraction of elongating RNA polymerases that pass through, resulting in locked ternary complexes. Cleavage of the nascent transcript by cleavage factors such as GreA or GreB allows the resumption of elongation from the new 3'terminus. GreA releases sequences of 2 to 3 nucleotides. This is Transcription elongation factor GreA from Streptococcus pneumoniae (strain ATCC 700669 / Spain 23F-1).